Reading from the N-terminus, the 491-residue chain is Glutamyl-tRNA(Gln) amidotransferase subunit A (491 aa).

Residues lysine 78 and serine 158 each act as charge relay system in the active site. The active-site Acyl-ester intermediate is serine 182.

The protein belongs to the amidase family. GatA subfamily. In terms of assembly, heterotrimer of A, B and C subunits.

The enzyme catalyses L-glutamyl-tRNA(Gln) + L-glutamine + ATP + H2O = L-glutaminyl-tRNA(Gln) + L-glutamate + ADP + phosphate + H(+). Functionally, allows the formation of correctly charged Gln-tRNA(Gln) through the transamidation of misacylated Glu-tRNA(Gln) in organisms which lack glutaminyl-tRNA synthetase. The reaction takes place in the presence of glutamine and ATP through an activated gamma-phospho-Glu-tRNA(Gln). The sequence is that of Glutamyl-tRNA(Gln) amidotransferase subunit A from Bradyrhizobium sp. (strain BTAi1 / ATCC BAA-1182).